The primary structure comprises 144 residues: D-aminoacyl-tRNA deacylase (144 aa).

A Gly-cisPro motif, important for rejection of L-amino acids motif is present at residues 136 to 137 (GP).

The protein belongs to the DTD family. Homodimer.

It localises to the cytoplasm. The enzyme catalyses glycyl-tRNA(Ala) + H2O = tRNA(Ala) + glycine + H(+). The catalysed reaction is a D-aminoacyl-tRNA + H2O = a tRNA + a D-alpha-amino acid + H(+). In terms of biological role, an aminoacyl-tRNA editing enzyme that deacylates mischarged D-aminoacyl-tRNAs. Also deacylates mischarged glycyl-tRNA(Ala), protecting cells against glycine mischarging by AlaRS. Acts via tRNA-based rather than protein-based catalysis; rejects L-amino acids rather than detecting D-amino acids in the active site. By recycling D-aminoacyl-tRNA to D-amino acids and free tRNA molecules, this enzyme counteracts the toxicity associated with the formation of D-aminoacyl-tRNA entities in vivo and helps enforce protein L-homochirality. This Haemophilus influenzae (strain PittGG) protein is D-aminoacyl-tRNA deacylase.